The primary structure comprises 543 residues: MAKRIIYNENARRALEKGMDILCESVAVTLGPKGRNVVLEKKFGAPQIVNDGVTIAKEIELEDNIENTGVALIRQAASKTNDAAGDGTTTATVLAHAMVKEGMRNVVAGANAISLKRGIEKAAGFLVEKIAENARSVEDSTAIAQVGTISAGNDDEVGQMIANAMDKVGKEGVISLEEGKSMTTELEVTEGMRFEKGYISPYFATDTERMEAVLDEPYILLTDKKITLVQDLVPVLEQAARAGKPLLVIAEDIEKEALATLVVNRLRGVLNVAAVKAPGFGDRRKAMLEDIAVLTGGQVITEDAGLKLETAKLEMMGQARRITITKDTTTLVAEGNEADVQARCEQIRRQMDETESSYDKEKLQERLAKLAGGVAVIKVGAATETEMKDRKLRLEDAINSTKAAVEEGIVPGGGTTLAHLGPQLASWAADNLTGEELIGATIVERALTAPLKRIAENAGQNGAVIAERVREKEFNVGFDASVNEFTDMFAAGIVDPAKVTRSALQNAASIAGMVLTTECIISDKPEPKENAPTGAGMGGDFDY.

ATP is bound by residues 29-32 (TLGP), 86-90 (DGTTT), G413, and D495. The segment at 524 to 543 (KPEPKENAPTGAGMGGDFDY) is disordered.

The protein belongs to the chaperonin (HSP60) family. In terms of assembly, forms a cylinder of 14 subunits composed of two heptameric rings stacked back-to-back. Interacts with the co-chaperonin GroES.

The protein localises to the cytoplasm. It catalyses the reaction ATP + H2O + a folded polypeptide = ADP + phosphate + an unfolded polypeptide.. Functionally, together with its co-chaperonin GroES, plays an essential role in assisting protein folding. The GroEL-GroES system forms a nano-cage that allows encapsulation of the non-native substrate proteins and provides a physical environment optimized to promote and accelerate protein folding. This Acaryochloris marina (strain MBIC 11017) protein is Chaperonin GroEL 2.